The sequence spans 216 residues: Adenylate kinase (216 aa).

10-15 (GAGKGT) is a binding site for ATP. The interval 30-59 (STGDMLRAAVNAGTEVGKRAKAVMDAGKLV) is NMP. AMP contacts are provided by residues threonine 31, arginine 36, 57 to 59 (KLV), 85 to 88 (GFPR), and glutamine 92. Positions 126–163 (GRYTCAQCGTVYHDTDKVPVEEGVCDKCGSTHFKRRPD) are LID. Residue arginine 127 coordinates ATP. Positions 130 and 133 each coordinate Zn(2+). 136–137 (VY) serves as a coordination point for ATP. Cysteine 150 and cysteine 153 together coordinate Zn(2+). 2 residues coordinate AMP: arginine 160 and arginine 172. Alanine 200 serves as a coordination point for ATP.

The protein belongs to the adenylate kinase family. In terms of assembly, monomer.

The protein resides in the cytoplasm. The catalysed reaction is AMP + ATP = 2 ADP. The protein operates within purine metabolism; AMP biosynthesis via salvage pathway; AMP from ADP: step 1/1. In terms of biological role, catalyzes the reversible transfer of the terminal phosphate group between ATP and AMP. Plays an important role in cellular energy homeostasis and in adenine nucleotide metabolism. The polypeptide is Adenylate kinase (Rhizobium etli (strain ATCC 51251 / DSM 11541 / JCM 21823 / NBRC 15573 / CFN 42)).